Consider the following 405-residue polypeptide: Secreted aspartic protease FUS4 (405 aa).

A signal peptide spans 1-24 (MLAIATLHVALQVFGAFSLSHAAA). The region spanning 49–400 (YLFNVTVGSP…NFEERSFGLA (352 aa)) is the Peptidase A1 domain. N52, N61, N107, and N123 each carry an N-linked (GlcNAc...) asparagine glycan. Residues C318 and C356 are joined by a disulfide bond.

Belongs to the peptidase A1 family.

The protein localises to the secreted. Its function is as follows. Secreted aspartic protease; part of the gene cluster that mediates the biosynthesis of the mycotoxin fusarin C. Within the cluster, FUS1, FUS2, FUS8 and FUS9 are sufficient for fusarin production. The other FUS cluster members are not essential for fusarin C biosynthesis. This chain is Secreted aspartic protease FUS4, found in Gibberella fujikuroi (strain CBS 195.34 / IMI 58289 / NRRL A-6831) (Bakanae and foot rot disease fungus).